A 469-amino-acid chain; its full sequence is Glutamine synthetase (469 aa).

The region spanning 15 to 96 (EDVKFIDVRF…INFFIHDPIT (82 aa)) is the GS beta-grasp domain. In terms of domain architecture, GS catalytic spans 104-469 (PRNVAKKAEA…PYEYEQYYDV (366 aa)). The Mg(2+) site is built by E129 and E131. Residue E205 participates in ATP binding. The Mg(2+) site is built by E210 and E218. Position 221–223 (221–223 (YKF)) interacts with ATP. Residues 262–263 (NG) and G263 each bind L-glutamate. Residue H267 participates in Mg(2+) binding. ATP-binding positions include 269 to 271 (HQS) and S271. Residues R320, E326, and R338 each coordinate L-glutamate. ATP is bound by residues R338, R343, and K352. Residue E357 coordinates Mg(2+). R359 is a binding site for L-glutamate. Y397 is modified (O-AMP-tyrosine).

It belongs to the glutamine synthetase family. In terms of assembly, oligomer of 12 subunits arranged in the form of two hexagons. It depends on Mg(2+) as a cofactor.

The protein resides in the cytoplasm. The enzyme catalyses L-glutamate + NH4(+) + ATP = L-glutamine + ADP + phosphate + H(+). Its activity is regulated as follows. The activity of this enzyme could be controlled by adenylation under conditions of abundant glutamine. Its function is as follows. Catalyzes the ATP-dependent biosynthesis of glutamine from glutamate and ammonia. The polypeptide is Glutamine synthetase (Streptomyces viridochromogenes).